A 293-amino-acid polypeptide reads, in one-letter code: Rhomboid-like protease 1 (293 aa).

Residues Glu-18–Ala-40 form a disordered region. 6 helical membrane passes run Val-62–Thr-82, Leu-112–Gln-132, Phe-148–Phe-168, Val-174–Thr-194, Leu-217–Leu-237, and Ala-262–Val-282. The active-site Nucleophile is the Ser-177. His-232 is an active-site residue.

It belongs to the peptidase S54 family.

It is found in the cytoplasmic vesicle. It localises to the secretory vesicle. The protein resides in the microneme membrane. The catalysed reaction is Cleaves type-1 transmembrane domains using a catalytic dyad composed of serine and histidine that are contributed by different transmembrane domains.. In terms of biological role, serine protease involved in intramembrane proteolysis and the subsequent release of polypeptides from their membrane anchors. Has no detectable activity towards MIC2. The chain is Rhomboid-like protease 1 (ROM1) from Toxoplasma gondii.